A 130-amino-acid polypeptide reads, in one-letter code: Small ribosomal subunit protein uS8 (130 aa).

The protein belongs to the universal ribosomal protein uS8 family. As to quaternary structure, part of the 30S ribosomal subunit. Contacts proteins S5 and S12.

One of the primary rRNA binding proteins, it binds directly to 16S rRNA central domain where it helps coordinate assembly of the platform of the 30S subunit. The protein is Small ribosomal subunit protein uS8 of Klebsiella pneumoniae (strain 342).